Here is a 1125-residue protein sequence, read N- to C-terminus: MKRSLRRVLRPEERKEVQGVVYRGVGEDMDCSKESFKVDIEGDMCRLEAFIKNRRKLSKYEDENLCLLHHAAAEGQVELMQLIINGSSCEALNVMDDYGNTPLHWAAEKNQVESVKFLLSQGANPNLRNRNMMAPLHIAVQGMYNEVIKVLTEHKATNINLEGENGNTALMSTCAKDNSEALQILLEKGAKLCKSNKWGDYPVHQAAFSGAKRCMELILAYGEKTGYSREAHINFVNHKKASPLHLAVQSGDLDMIKMCLDSGAHIDMMENAKCMALHFAATQGATDIVKLMISSYTGSSDIVNAVDGNQETLLHRASLFDHHDLADYLISVGADINSTDSEGRSPLILATASASWNIVNLLLSKGAKVDIKDHLGRNFLHLTVQQPYGLRNLRPEFLQMQHIKELVMDEDNDGCTPLHYACRQGAPVSVNNLLRFNVSVHSKSKDKKSPLHFAASYGRINTCQRLLQDISDTRLLNEGDLHGMTPLHLAAKNGHDKVVQLLLKKGALFLSDHNGWTALHHASMGGYTQTMKVILDTNLKCTDRLDEEGNTALHFAAREGHAKAVAMLLSYNADILLNKKQASFLHIALHNKRKEVVLTTIRSKRWDECLQVFTHDSPSNRCPIMEMVEYLPECMKVLLDFCMIPSTEDKSCQDYHIEYNFKYLQCPLSMTKKVTPTQDVIYEPLTILNVMVQHNRIELLNHPVCREYLLMKWCAYGFRAHMMNLGSYCLGLIPMTLLVVKIQPGMAFNSTGIINETISTHEERINTLNSFPLKICMILVFLSSIFGYCKEVVQIFQQKRNYFLDYNNALEWVIYTTSMIFVLPLFLDIPAYMQWQCGAIAIFFYWMNFLLYLQRFENCGIFIVMLEVIFKTLLRSTGVFIFLLLAFGLSFYVLLNFQDAFSTPLLSLIQTFSMMLGDINYRDAFLEPLFRNELAYPVLTFGQLIAFTMFVPIVLMNLLIGLAVGDIAEVQKHASLKRIAMQVELHTNLEKKLPFWYLRKVDQRSTIVYPNRPRHGRMLRFFHYFLSMQETRQEAPNIDTCLEMEILKQKYRLKDLTSLLEKQHELIKLIIQKMEIISETEDEDNHCSFQDRFKKERLEQMHSKWNFVLNAVKTKTHCSISHPDI.

At 1–721 (MKRSLRRVLR…KWCAYGFRAH (721 aa)) the chain is on the cytoplasmic side. ANK repeat units lie at residues 63–94 (ENLCLLHHAAAEGQVELMQLIINGSSCEALNV), 98–127 (YGNTPLHWAAEKNQVESVKFLLSQGANPNL), 131–161 (NMMAPLHIAVQGMYNEVIKVLTEHKATNINL), 165–194 (NGNTALMSTCAKDNSEALQILLEKGAKLCK), 198–227 (WGDYPVHQAAFSGAKRCMELILAYGEKTGY), 239–268 (KKASPLHLAVQSGDLDMIKMCLDSGAHIDM), 272–301 (AKCMALHFAATQGATDIVKLMISSYTGSSD), 309–338 (NQETLLHRASLFDHHDLADYLISVGADINS), and 342–371 (EGRSPLILATASASWNIVNLLLSKGAKVDI). Disulfide bonds link C193/C666, C463/C666, C609/C622, C622/C666, and C634/C859. P395 is subject to 4-hydroxyproline; transient. ANK repeat units follow at residues 413–442 (DGCTPLHYACRQGAPVSVNNLLRFNVSVHS), 446–475 (DKKSPLHFAASYGRINTCQRLLQDISDTRL), 482–511 (HGMTPLHLAAKNGHDKVVQLLLKKGALFLS), 514–543 (NGWTALHHASMGGYTQTMKVILDTNLKCTD), and 548–577 (EGNTALHFAAREGHAKAVAMLLSYNADILL). 2 residues coordinate (E)-cinnamaldehyde: C415 and C422. C622 is a binding site for (E)-cinnamaldehyde. Residue C634 is modified to Cysteine sulfenic acid (-SOH); transient; in hyperoxia. Residues C642, C666, and K712 each contribute to the (E)-cinnamaldehyde site. The chain crosses the membrane as a helical span at residues 722–742 (MMNLGSYCLGLIPMTLLVVKI). Residues 743–767 (QPGMAFNSTGIINETISTHEERINT) lie on the Extracellular side of the membrane. Residues N749 and N755 are each glycosylated (N-linked (GlcNAc...) asparagine). Residues 768–788 (LNSFPLKICMILVFLSSIFGY) form a helical membrane-spanning segment. The Cytoplasmic portion of the chain corresponds to 789-806 (CKEVVQIFQQKRNYFLDY). Positions 791, 794, 808, and 811 each coordinate Ca(2+). A helical membrane pass occupies residues 807–827 (NNALEWVIYTTSMIFVLPLFL). At 828–832 (DIPAY) the chain is on the extracellular side. The chain crosses the membrane as a helical span at residues 833–853 (MQWQCGAIAIFFYWMNFLLYL). Residues 854 to 876 (QRFENCGIFIVMLEVIFKTLLRS) are Cytoplasmic-facing. A Cysteine sulfenic acid (-SOH); transient; in hyperoxia modification is found at C859. Residues 877–897 (TGVFIFLLLAFGLSFYVLLNF) form a helical membrane-spanning segment. At 898–904 (QDAFSTP) the chain is on the extracellular side. Residues 905–925 (LLSLIQTFSMMLGDINYRDAF) constitute an intramembrane region (pore-forming). The Extracellular portion of the chain corresponds to 926 to 937 (LEPLFRNELAYP). Residues 938–959 (VLTFGQLIAFTMFVPIVLMNLL) form a helical membrane-spanning segment. The Cytoplasmic segment spans residues 960 to 1125 (IGLAVGDIAE…THCSISHPDI (166 aa)). A coiled-coil region spans residues 1044-1073 (MEILKQKYRLKDLTSLLEKQHELIKLIIQK). 1048 to 1054 (KQKYRLK) contributes to the a 1,2-diacyl-sn-glycero-3-phospho-(1D-myo-inositol) binding site.

This sequence belongs to the transient receptor (TC 1.A.4) family. In terms of assembly, homotetramer. Interacts with TMEM100. Interacts with EGLN1. Interacts with the scorpion wasabi receptor toxin at the same site that electrophiles but in a non-covalent manner. In terms of processing, TRPA1 activation by electrophiles occurs though covalent modification of specific cysteine residues in the N-terminal cytoplasmic domain. Hydroxylation is required for TRPA1 activity inhibition in normoxia. In hypoxia, the decrease in oxygen concentration diminishes the activity of the hydroxylase EGLN1, thus relieving TRPA1 from inhibition and ultimately leading to channel activation. Post-translationally, oxidation of Cys-634 and Cys-859 in hyperoxia may override the hydroxylase EGLN1-mediated inhibition, causing TRPA1 activation. In terms of tissue distribution, specifically expressed in a subset of nociceptive neurons. Expressed in dorsal root ganglia.

It localises to the cell membrane. The catalysed reaction is Ca(2+)(in) = Ca(2+)(out). It carries out the reaction Mg(2+)(in) = Mg(2+)(out). The enzyme catalyses Na(+)(in) = Na(+)(out). It catalyses the reaction K(+)(in) = K(+)(out). The catalysed reaction is Zn(2+)(in) = Zn(2+)(out). With respect to regulation, electrophilic ligands activate the channel by covalent modification of intracellular cysteines; Cys-622 plays a key role in covalent binding of electrophiles. Extracellular Ca(2+) both potentiates and inactivates TRPA1; a rapid potentiation follows by slow desensitization. Activated by increase in intracellular Ca(2+) concentration. Inhibited by ruthenium red, a potent blocker of TRPV channels and selectively by A-967079. Activated by benzyl isothiocyanate (BITC), iodoacetamide, sulfhydryl reactive agent MTSEA, N-methyl maleimide (NMM), N-ethylmaleimide (NEM), and 2-aminoethyldiphenylborinate (2-APB). Also activated by hyperoxia. Acivated by intracellular Zn(2+). TRPA1 activation may critically depend on the presence of small intracellular compounds such as polyphosphates. Its function is as follows. Ligand-activated Ca(2+)-permeable, nonselective cation channel. Involved in pain detection and possibly also in cold perception, oxygen concentration perception, cough, itch, and inner ear function. Has a relatively high Ca(2+) selectivity, with a preference for divalent over monovalent cations (Ca(2+) &gt; Ba(2+) &gt; Mg(2+) &gt; NH4(+) &gt; Li(+) &gt; K(+)), the influx of cation into the cytoplasm, leads to membrane depolarization. Has a central role in the pain response to endogenous inflammatory mediators, such as bradykinin and to a diverse array of irritants. Activated by a large variety of structurally unrelated electrophilic and non-electrophilic chemical compounds, such as allylthiocyanate (AITC) from mustard oil or wasabi, cinnamaldehyde, diallyl disulfide (DADS) from garlic, and acrolein, an environmental irritant. Electrophilic ligands activate TRPA1 by interacting with critical N-terminal Cys residues in a covalent manner. Non-electrophile agonists bind at distinct sites in the transmembrane domain to promote channel activation. Also acts as an ionotropic cannabinoid receptor by being activated by delta(9)-tetrahydrocannabinol (THC), the psychoactive component of marijuana. May be a component for the mechanosensitive transduction channel of hair cells in inner ear, thereby participating in the perception of sounds. In Rattus norvegicus (Rat), this protein is Transient receptor potential cation channel subfamily A member 1.